The sequence spans 525 residues: Bifunctional purine biosynthesis protein PurH (525 aa).

The 148-residue stretch at 1 to 148 (MPSNNLIKNA…KNYKNVIVIV (148 aa)) folds into the MGS-like domain.

This sequence belongs to the PurH family.

The catalysed reaction is (6R)-10-formyltetrahydrofolate + 5-amino-1-(5-phospho-beta-D-ribosyl)imidazole-4-carboxamide = 5-formamido-1-(5-phospho-D-ribosyl)imidazole-4-carboxamide + (6S)-5,6,7,8-tetrahydrofolate. It carries out the reaction IMP + H2O = 5-formamido-1-(5-phospho-D-ribosyl)imidazole-4-carboxamide. It participates in purine metabolism; IMP biosynthesis via de novo pathway; 5-formamido-1-(5-phospho-D-ribosyl)imidazole-4-carboxamide from 5-amino-1-(5-phospho-D-ribosyl)imidazole-4-carboxamide (10-formyl THF route): step 1/1. It functions in the pathway purine metabolism; IMP biosynthesis via de novo pathway; IMP from 5-formamido-1-(5-phospho-D-ribosyl)imidazole-4-carboxamide: step 1/1. The chain is Bifunctional purine biosynthesis protein PurH from Buchnera aphidicola subsp. Acyrthosiphon pisum (strain 5A).